A 72-amino-acid polypeptide reads, in one-letter code: Small ribosomal subunit protein bS18 (72 aa).

It belongs to the bacterial ribosomal protein bS18 family. Part of the 30S ribosomal subunit. Forms a tight heterodimer with protein bS6.

In terms of biological role, binds as a heterodimer with protein bS6 to the central domain of the 16S rRNA, where it helps stabilize the platform of the 30S subunit. This Francisella tularensis subsp. holarctica (strain OSU18) protein is Small ribosomal subunit protein bS18.